We begin with the raw amino-acid sequence, 158 residues long: PTS system fructose-specific EIIB component (158 aa).

Residues 1 to 98 (MKLVAVTSCP…AEAVVQKAVE (98 aa)) form the PTS EIIB type-2 domain. Cys9 serves as the catalytic Phosphocysteine intermediate. Cys9 carries the phosphocysteine; by EIIA modification. The tract at residues 104 to 147 (KTGSVTFGSGDDGEDADVGADDSSDDADAAESDEPVRRGGDPEK) is disordered. Acidic residues predominate over residues 114-136 (DDGEDADVGADDSSDDADAAESD). The segment covering 137 to 147 (EPVRRGGDPEK) has biased composition (basic and acidic residues).

Its subcellular location is the cytoplasm. The catalysed reaction is D-fructose(out) + N(pros)-phospho-L-histidyl-[protein] = D-fructose 1-phosphate(in) + L-histidyl-[protein]. Functionally, the phosphoenolpyruvate-dependent sugar phosphotransferase system (sugar PTS), a major carbohydrate active transport system, catalyzes the phosphorylation of incoming sugar substrates concomitantly with their translocation across the cell membrane. The enzyme II PtfABC PTS system is involved in fructose transport. This Haloferax volcanii (strain ATCC 29605 / DSM 3757 / JCM 8879 / NBRC 14742 / NCIMB 2012 / VKM B-1768 / DS2) (Halobacterium volcanii) protein is PTS system fructose-specific EIIB component.